Reading from the N-terminus, the 287-residue chain is Elongation factor Ts (287 aa).

An involved in Mg(2+) ion dislocation from EF-Tu region spans residues threonine 79 to valine 82.

The protein belongs to the EF-Ts family.

It is found in the cytoplasm. Its function is as follows. Associates with the EF-Tu.GDP complex and induces the exchange of GDP to GTP. It remains bound to the aminoacyl-tRNA.EF-Tu.GTP complex up to the GTP hydrolysis stage on the ribosome. The sequence is that of Elongation factor Ts from Anaplasma phagocytophilum (strain HZ).